A 757-amino-acid chain; its full sequence is MKLHSSSKIPNHAWLSDARMNNPSETSKSSESGDGNTGTQTNGLDFQKQAVPIGAITSAQAQALLGHLHQVQLAGTSLQAAAQSLNVQTKFKEEPGEPTQAVQPSQQPSLQAAIPQTQLMVAGGPITGLTLTPAQQQLLLQQAQAQLLAAAVQHSASQQHSAAGATISASAATPMTQIPLSQPIQIAQDLQQLQQLQQQNLNLQQFVLVHPTTNLPPAQFIISQTPQGQQGLLQAQNLLTQLPQQSQANLLQSQPSITLTSQPATPTRTIAATPVQQLPQSQTTPKRIDTPSLEEPSDLEELEQFAKTFKQRRIKLGFTQGDVGLAMGKLYGNDFSQTTISRFEALNLSFKNMCKLKPLLEKWLNDAENITSDSSLSNQSVLNSPGHGMEGLNRRRKKRTSIETNIRVALEKSFLENQKPTSEEITMIADQLNMEKEVIRVWFCNRRQKEKRINPPSSGGSSSSPIKSLFSSANPLVATTPSLVTSSTATTLTVNPVLPLTSAAAITSFPVPGTTGTSSANTATVISTAPPVSSVLTSPSLSPSPSATAATSEASTASGTSTTHTTSTPLTSPLSTGQVMVTASGIHTAATALQGAAQLPTSASLAAMAAAAGLNPGLMAPSQFAAGGALFSLNPGALGSALSPALMSNSTLATIQALASSGSLPITSLDATGNLVFANAGGTPNIVTAPLFLNPQNLSLLTSNPVSLVSAASTGVTGPITSLHATTSSVDSVQNTLFTVASASGAASTTTSASKAQ.

Disordered stretches follow at residues 1–43 (MKLH…QTNG), 271–295 (AATP…SLEE), 375–398 (SLSN…RRKK), and 532–574 (VSSV…TSPL). 2 stretches are compositionally biased toward polar residues: residues 19–43 (RMNN…QTNG) and 275–285 (VQQLPQSQTTP). Positions 294–368 (EEPSDLEELE…LLEKWLNDAE (75 aa)) constitute a POU-specific domain. Residues 395–454 (RRKKRTSIETNIRVALEKSFLENQKPTSEEITMIADQLNMEKEVIRVWFCNRRQKEKRIN) constitute a DNA-binding region (homeobox).

This sequence belongs to the POU transcription factor family. Class-2 subfamily.

Its subcellular location is the cytoplasm. The protein resides in the nucleus. Functionally, transcription factor that binds to the octamer motif (5'-ATTTGCAT-3') and activates the promoters of the genes for some small nuclear RNAs (snRNA) and histone H2B. Acts downstream of Notch signaling during radial glia formation. Regulates apoptosis, possibly via an FGF-signaling pathway. This is POU domain, class 2, transcription factor 1 from Xenopus tropicalis (Western clawed frog).